The sequence spans 1114 residues: Mediator of RNA polymerase II transcription subunit 14 (1114 aa).

Disordered stretches follow at residues 1–27 (MPGV…QDGL), 40–79 (ANAQ…GPPE), and 120–141 (HGIH…SPGN). A compositionally biased stretch (polar residues) spans 126–140 (TAPTTGKSPGNQSPG).

This sequence belongs to the Mediator complex subunit 14 family. Component of the Mediator complex.

Its subcellular location is the nucleus. Its function is as follows. Component of the Mediator complex, a coactivator involved in the regulated transcription of nearly all RNA polymerase II-dependent genes. Mediator functions as a bridge to convey information from gene-specific regulatory proteins to the basal RNA polymerase II transcription machinery. Mediator is recruited to promoters by direct interactions with regulatory proteins and serves as a scaffold for the assembly of a functional preinitiation complex with RNA polymerase II and the general transcription factors. This chain is Mediator of RNA polymerase II transcription subunit 14 (rgr1), found in Aspergillus niger (strain ATCC MYA-4892 / CBS 513.88 / FGSC A1513).